A 267-amino-acid polypeptide reads, in one-letter code: Large ribosomal subunit protein uL2c (267 aa).

It belongs to the universal ribosomal protein uL2 family. Part of the 50S ribosomal subunit.

Its subcellular location is the plastid. It localises to the apicoplast. This chain is Large ribosomal subunit protein uL2c (rpl2), found in Toxoplasma gondii.